The following is a 231-amino-acid chain: tRNA (guanine-N(1)-)-methyltransferase (231 aa).

Residues G112 and 132–137 (LGDFVL) each bind S-adenosyl-L-methionine.

The protein belongs to the RNA methyltransferase TrmD family. In terms of assembly, homodimer.

The protein resides in the cytoplasm. It carries out the reaction guanosine(37) in tRNA + S-adenosyl-L-methionine = N(1)-methylguanosine(37) in tRNA + S-adenosyl-L-homocysteine + H(+). Its function is as follows. Specifically methylates guanosine-37 in various tRNAs. The polypeptide is tRNA (guanine-N(1)-)-methyltransferase (Gloeothece citriformis (strain PCC 7424) (Cyanothece sp. (strain PCC 7424))).